The primary structure comprises 480 residues: Uridine 5'-monophosphate synthase (480 aa).

Position 2 is an N-acetylalanine (Ala-2). Residues 2–214 (AVARAALGPL…VFVAANHNGS (213 aa)) are OPRTase. Residue Tyr-37 is modified to Phosphotyrosine. Ser-214 carries the post-translational modification Phosphoserine. The domain linker stretch occupies residues 215 to 220 (PLSIKE). Positions 221–480 (APKELSFGAR…WEAYLSRLGV (260 aa)) are OMPdecase. Residue Ser-257 coordinates orotidine 5'-phosphate. Residues Ser-257, Asp-259, and 281 to 283 (KTH) contribute to the UMP site. An orotidine 5'-phosphate-binding site is contributed by Lys-281. Residues Asp-312, Lys-314, and Asp-317 each act as for OMPdecase activity in the active site. Orotidine 5'-phosphate contacts are provided by residues Lys-314, Asp-317, Thr-321, Ser-372, 430-432 (QQY), and 450-451 (GR). Residues Asp-317, Thr-321, Ser-372, 430 to 432 (QQY), and 450 to 451 (GR) each bind UMP.

In the N-terminal section; belongs to the purine/pyrimidine phosphoribosyltransferase family. This sequence in the C-terminal section; belongs to the OMP decarboxylase family. As to quaternary structure, homodimer; dimerization is required for enzymatic activity.

The catalysed reaction is orotidine 5'-phosphate + diphosphate = orotate + 5-phospho-alpha-D-ribose 1-diphosphate. It carries out the reaction orotidine 5'-phosphate + H(+) = UMP + CO2. It participates in pyrimidine metabolism; UMP biosynthesis via de novo pathway; UMP from orotate: step 1/2. It functions in the pathway pyrimidine metabolism; UMP biosynthesis via de novo pathway; UMP from orotate: step 2/2. Bifunctional enzyme catalyzing the last two steps of de novo pyrimidine biosynthesis, orotate phosphoribosyltransferase (OPRT), which converts orotate to orotidine-5'-monophosphate (OMP), and orotidine-5'-monophosphate decarboxylase (ODC), the terminal enzymatic reaction that decarboxylates OMP to uridine monophosphate (UMP). This Homo sapiens (Human) protein is Uridine 5'-monophosphate synthase.